The sequence spans 443 residues: Phosphoglucosamine mutase (443 aa).

Residue Ser101 is the Phosphoserine intermediate of the active site. Mg(2+) is bound by residues Ser101, Asp239, Asp241, and Asp243. Position 101 is a phosphoserine (Ser101).

This sequence belongs to the phosphohexose mutase family. Mg(2+) serves as cofactor. Activated by phosphorylation.

The enzyme catalyses alpha-D-glucosamine 1-phosphate = D-glucosamine 6-phosphate. Functionally, catalyzes the conversion of glucosamine-6-phosphate to glucosamine-1-phosphate. This is Phosphoglucosamine mutase from Francisella philomiragia subsp. philomiragia (strain ATCC 25017 / CCUG 19701 / FSC 153 / O#319-036).